The primary structure comprises 346 residues: Parapinopsin (346 aa).

The Extracellular segment spans residues 1 to 29 (MASIILINFSETDTLHLGSVNDHIMPRIG). N-linked (GlcNAc...) asparagine glycosylation occurs at N8. The helical transmembrane segment at 30–54 (YTILSIIMALSSTFGIILNMVVIIV) threads the bilayer. Over 55-66 (TVRYKQLRQPLN) the chain is Cytoplasmic. The chain crosses the membrane as a helical span at residues 67 to 91 (YALVNLAVADLGCPVFGGLLTAVTN). Topologically, residues 92–106 (AMGYFSLGRVGCVLE) are extracellular. Cysteines 103 and 180 form a disulfide. A helical membrane pass occupies residues 107–126 (GFAVAFFGIAGLCSVAVIAV). Topologically, residues 127 to 145 (DRYMVVCRPLGAVMFQTKH) are cytoplasmic. Residues 146-169 (ALAGVVFSWVWSFIWNTPPLFGWG) form a helical membrane-spanning segment. Residues 170–193 (SYQLEGVMTSCAPNWYRRDPVNVS) lie on the Extracellular side of the membrane. N191 is a glycosylation site (N-linked (GlcNAc...) asparagine). A helical membrane pass occupies residues 194–221 (YILCYFMLCFALPFATIIFSYMHLLHTL). The Cytoplasmic portion of the chain corresponds to 222–244 (WQVAKLQVADSGSTAKVEVQVAR). The chain crosses the membrane as a helical span at residues 245–268 (MVVIMVMAFLLTWLPYAAFALTVI). The Extracellular segment spans residues 269 to 276 (IDSNIYIN). Residues 277–301 (PVIGTIPAYLAKSSTVFNPIIYIFM) form a helical membrane-spanning segment. The residue at position 288 (K288) is an N6-(retinylidene)lysine. Residues 302–346 (NRQFRDYALPCLLCGKNPWAAKEGRDSDTNTLTTTVSKNTSVSPL) lie on the Cytoplasmic side of the membrane. Residue C315 is the site of S-palmitoyl cysteine attachment. The segment at 325–346 (GRDSDTNTLTTTVSKNTSVSPL) is disordered. Residues 330–346 (TNTLTTTVSKNTSVSPL) show a composition bias toward low complexity.

The protein belongs to the G-protein coupled receptor 1 family. Opsin subfamily. In terms of processing, phosphorylated on some or all of the serine and threonine residues present in the C-terminal region. In terms of tissue distribution, parapineal organ.

The protein resides in the membrane. In Ictalurus punctatus (Channel catfish), this protein is Parapinopsin.